The following is a 264-amino-acid chain: Cell division protein FtsQ (264 aa).

Residues 1–24 (MAGPTTAERGARQQESSGPPRVRR) form a disordered region. Over 1-32 (MAGPTTAERGARQQESSGPPRVRRFRPPRLRT) the chain is Cytoplasmic. A helical transmembrane segment spans residues 33-53 (IIILAVALVLVAGGTVWVLYG). Over 54–264 (SNWTRLERVS…VATAPASSGS (211 aa)) the chain is Extracellular. The POTRA domain maps to 57–126 (TRLERVSVSG…HGIGLKVTER (70 aa)).

It belongs to the FtsQ/DivIB family. FtsQ subfamily.

The protein localises to the cell membrane. Functionally, essential cell division protein. The protein is Cell division protein FtsQ of Streptomyces coelicolor (strain ATCC BAA-471 / A3(2) / M145).